A 171-amino-acid chain; its full sequence is MQQSSYTFDELLACGRGEMFGPGNAQLPAPPMLMFDRIVRIESDGGKYGKGYVEAEFDINPDLWFFACHFIGDPVMPGCLGLDAMWQLVGFFLGWSGGPGRGRALGVGEVKFTGQVTPDVKRVTYKIDLKRVIMRKLVMGIADGVVEADGKPIYEAKDLKVGLFTAEQMAS.

Residue His-69 is part of the active site.

Belongs to the thioester dehydratase family. FabA subfamily. As to quaternary structure, homodimer.

The protein localises to the cytoplasm. It catalyses the reaction a (3R)-hydroxyacyl-[ACP] = a (2E)-enoyl-[ACP] + H2O. The catalysed reaction is (3R)-hydroxydecanoyl-[ACP] = (2E)-decenoyl-[ACP] + H2O. It carries out the reaction (2E)-decenoyl-[ACP] = (3Z)-decenoyl-[ACP]. It functions in the pathway lipid metabolism; fatty acid biosynthesis. Functionally, necessary for the introduction of cis unsaturation into fatty acids. Catalyzes the dehydration of (3R)-3-hydroxydecanoyl-ACP to E-(2)-decenoyl-ACP and then its isomerization to Z-(3)-decenoyl-ACP. Can catalyze the dehydratase reaction for beta-hydroxyacyl-ACPs with saturated chain lengths up to 16:0, being most active on intermediate chain length. The polypeptide is 3-hydroxydecanoyl-[acyl-carrier-protein] dehydratase (Caulobacter sp. (strain K31)).